Consider the following 596-residue polypeptide: Ferredoxin--nitrite reductase, chloroplastic (596 aa).

Residues 1 to 28 (MASSASLQRFLPPYPHAAASRCRPPGVR) constitute a chloroplast transit peptide. Residues 1 to 56 (MASSASLQRFLPPYPHAAASRCRPPGVRARPVQSSTVSAPSSSTPAADEAVSAERL) are disordered. The span at 31-47 (PVQSSTVSAPSSSTPAA) shows a compositional bias: low complexity. Residues Cys-474, Cys-480, Cys-515, and Cys-519 each coordinate [4Fe-4S] cluster. Residue Cys-519 coordinates siroheme.

Belongs to the nitrite and sulfite reductase 4Fe-4S domain family. Monomer. Siroheme is required as a cofactor. The cofactor is [4Fe-4S] cluster.

It is found in the plastid. It localises to the chloroplast. The catalysed reaction is 6 oxidized [2Fe-2S]-[ferredoxin] + NH4(+) + 2 H2O = nitrite + 6 reduced [2Fe-2S]-[ferredoxin] + 8 H(+). The protein operates within nitrogen metabolism; nitrate reduction (assimilation). Catalyzes the six-electron reduction of nitrite to ammonium. The sequence is that of Ferredoxin--nitrite reductase, chloroplastic from Oryza sativa subsp. japonica (Rice).